A 256-amino-acid chain; its full sequence is Imidazole glycerol phosphate synthase subunit HisF (256 aa).

Active-site residues include D12 and D131.

It belongs to the HisA/HisF family. In terms of assembly, heterodimer of HisH and HisF.

The protein resides in the cytoplasm. The catalysed reaction is 5-[(5-phospho-1-deoxy-D-ribulos-1-ylimino)methylamino]-1-(5-phospho-beta-D-ribosyl)imidazole-4-carboxamide + L-glutamine = D-erythro-1-(imidazol-4-yl)glycerol 3-phosphate + 5-amino-1-(5-phospho-beta-D-ribosyl)imidazole-4-carboxamide + L-glutamate + H(+). Its pathway is amino-acid biosynthesis; L-histidine biosynthesis; L-histidine from 5-phospho-alpha-D-ribose 1-diphosphate: step 5/9. In terms of biological role, IGPS catalyzes the conversion of PRFAR and glutamine to IGP, AICAR and glutamate. The HisF subunit catalyzes the cyclization activity that produces IGP and AICAR from PRFAR using the ammonia provided by the HisH subunit. The sequence is that of Imidazole glycerol phosphate synthase subunit HisF from Pseudomonas paraeruginosa (strain DSM 24068 / PA7) (Pseudomonas aeruginosa (strain PA7)).